The sequence spans 164 residues: DNA-directed RNA polymerase 19 kDa subunit (164 aa).

Residues 1–35 (MADTDDIIDYESDDLTEYEDDEEEEEDGESLETSD) are compositionally biased toward acidic residues. The tract at residues 1–39 (MADTDDIIDYESDDLTEYEDDEEEEEDGESLETSDIDPK) is disordered.

It belongs to the poxviridae DNA-directed RNA polymerase 19 kDa subunit family. As to quaternary structure, the DNA-dependent RNA polymerase used for intermediate and late genes expression consists of eight subunits Rpo30/OPG66, Rpo7/OPG90, Rpo22/OPG103, Rpo147/OPG105, Rpo18/OPG119, Rpo19/OPG131, Rpo132/OPG151 and Rpo35/OPG156. The same holoenzyme, with the addition of the transcription-specificity factor OPG109, is used for early gene expression.

The protein resides in the virion. The catalysed reaction is RNA(n) + a ribonucleoside 5'-triphosphate = RNA(n+1) + diphosphate. Part of the DNA-dependent RNA polymerase which catalyzes the transcription of viral DNA into RNA using the four ribonucleoside triphosphates as substrates. Responsible for the transcription of early, intermediate and late genes. DNA-dependent RNA polymerase associates with the early transcription factor (ETF), itself composed of OPG118 and OPG133, thereby allowing the early genes transcription. Late transcription, and probably also intermediate transcription, require newly synthesized RNA polymerase. The polypeptide is DNA-directed RNA polymerase 19 kDa subunit (OPG131) (Homo sapiens (Human)).